The sequence spans 125 residues: Small ribosomal subunit protein uS13 (125 aa).

The interval 93 to 125 (RKGLPVRGQRTKTNARTRKGPKRTVAGKKKAGR) is disordered.

Belongs to the universal ribosomal protein uS13 family. Part of the 30S ribosomal subunit. Forms a loose heterodimer with protein S19. Forms two bridges to the 50S subunit in the 70S ribosome.

Its function is as follows. Located at the top of the head of the 30S subunit, it contacts several helices of the 16S rRNA. In the 70S ribosome it contacts the 23S rRNA (bridge B1a) and protein L5 of the 50S subunit (bridge B1b), connecting the 2 subunits; these bridges are implicated in subunit movement. Contacts the tRNAs in the A and P-sites. The chain is Small ribosomal subunit protein uS13 from Paenarthrobacter aurescens (strain TC1).